The primary structure comprises 248 residues: 3-deoxy-manno-octulosonate cytidylyltransferase (248 aa).

The protein belongs to the KdsB family.

The protein localises to the cytoplasm. It catalyses the reaction 3-deoxy-alpha-D-manno-oct-2-ulosonate + CTP = CMP-3-deoxy-beta-D-manno-octulosonate + diphosphate. It functions in the pathway nucleotide-sugar biosynthesis; CMP-3-deoxy-D-manno-octulosonate biosynthesis; CMP-3-deoxy-D-manno-octulosonate from 3-deoxy-D-manno-octulosonate and CTP: step 1/1. Its pathway is bacterial outer membrane biogenesis; lipopolysaccharide biosynthesis. Functionally, activates KDO (a required 8-carbon sugar) for incorporation into bacterial lipopolysaccharide in Gram-negative bacteria. This is 3-deoxy-manno-octulosonate cytidylyltransferase from Chlorobium phaeobacteroides (strain BS1).